We begin with the raw amino-acid sequence, 522 residues long: Sugar transport protein 1 (522 aa).

The Cytoplasmic portion of the chain corresponds to 1 to 22; that stretch reads MPAGGFVVGDGQKAYPGKLTPF. Residues 23-43 form a helical membrane-spanning segment; the sequence is VLFTCVVAAMGGLIFGYDIGI. The Extracellular portion of the chain corresponds to 44–79; the sequence is SGGVTSMPSFLKRFFPSVYRKQQEDASTNQYCQYDS. A helical transmembrane segment spans residues 80 to 100; that stretch reads PTLTMFTSSLYLAALISSLVA. Residues 101-117 lie on the Cytoplasmic side of the membrane; the sequence is STVTRKFGRRLSMLFGG. Residues 118 to 138 form a helical membrane-spanning segment; sequence ILFCAGALINGFAKHVWMLIV. Topologically, residues 139-140 are extracellular; the sequence is GR. The helical transmembrane segment at 141–161 threads the bilayer; that stretch reads ILLGFGIGFANQAVPLYLSEM. The Cytoplasmic segment spans residues 162-171; sequence APYKYRGALN. Residues 172 to 192 form a helical membrane-spanning segment; that stretch reads IGFQLSITIGILVAEVLNYFF. Over 193-202 the chain is Extracellular; it reads AKIKGGWGWR. The helical transmembrane segment at 203–223 threads the bilayer; that stretch reads LSLGGAVVPALIITIGSLVLP. Over 224 to 289 the chain is Cytoplasmic; sequence DTPNSMIERG…YRPHLTMAVM (66 aa). Serine 252 bears the Phosphoserine mark. Residues 290-310 form a helical membrane-spanning segment; it reads IPFFQQLTGINVIMFYAPVLF. The Extracellular portion of the chain corresponds to 311–321; it reads NTIGFTTDASL. A helical membrane pass occupies residues 322 to 342; sequence MSAVVTGSVNVAATLVSIYGV. Topologically, residues 343-348 are cytoplasmic; sequence DRWGRR. Residues 349–369 traverse the membrane as a helical segment; the sequence is FLFLEGGTQMLICQAVVAACI. At 370–384 the chain is on the extracellular side; it reads GAKFGVDGTPGELPK. The helical transmembrane segment at 385–405 threads the bilayer; the sequence is WYAIVVVTFICIYVAGFAWSW. Over 406–427 the chain is Cytoplasmic; the sequence is GPLGWLVPSEIFPLEIRSAAQS. The chain crosses the membrane as a helical span at residues 428-448; that stretch reads ITVSVNMIFTFIIAQIFLTML. Residues 449–452 are Extracellular-facing; it reads CHLK. Residues 453-473 form a helical membrane-spanning segment; it reads FGLFLVFAFFVVVMSIFVYIF. Residues 474–522 lie on the Cytoplasmic side of the membrane; the sequence is LPETKGIPIEEMGQVWRSHWYWSRFVEDGEYGNALEMGKNSNQAGTKHV.

The protein belongs to the major facilitator superfamily. Sugar transporter (TC 2.A.1.1) family. Mostly expressed in young leaves, especially in guard cells (at protein level). Also present in roots.

The protein localises to the cell membrane. Its function is as follows. Major hexose transporter. Mediates an active uptake of hexoses, by sugar/hydrogen symport. Can transport glucose, 3-O-methylglucose, fructose, xylose, mannose, galactose, fucose, 2-deoxyglucose and arabinose. Confers sensitivity to galactose in seedlings. This Arabidopsis thaliana (Mouse-ear cress) protein is Sugar transport protein 1 (STP1).